The sequence spans 224 residues: UPF0173 metal-dependent hydrolase TK0141 (224 aa).

Belongs to the UPF0173 family.

The protein is UPF0173 metal-dependent hydrolase TK0141 of Thermococcus kodakarensis (strain ATCC BAA-918 / JCM 12380 / KOD1) (Pyrococcus kodakaraensis (strain KOD1)).